A 262-amino-acid polypeptide reads, in one-letter code: Cytochrome c oxidase subunit 3 (262 aa).

Helical transmembrane passes span 39–59 (YDISLFVLGNIITILTVYQWW), 83–103 (GMILFILSEVLFFVSFFWAFF), 120–140 (MGIISFNPFQIPLLNTAILLA), 163–183 (GLFFTVLLGIYFTILQAYEYI), 198–218 (FFMATGFHGIHVLIGTTFLLV), and 240–260 (AWYWHFVDVVWLFLYITIYWW).

This sequence belongs to the cytochrome c oxidase subunit 3 family. In terms of assembly, component of the cytochrome c oxidase (complex IV, CIV), a multisubunit enzyme composed of a catalytic core of 3 subunits and several supernumerary subunits. The complex exists as a monomer or a dimer and forms supercomplexes (SCs) in the inner mitochondrial membrane with ubiquinol-cytochrome c oxidoreductase (cytochrome b-c1 complex, complex III, CIII).

It localises to the mitochondrion inner membrane. It catalyses the reaction 4 Fe(II)-[cytochrome c] + O2 + 8 H(+)(in) = 4 Fe(III)-[cytochrome c] + 2 H2O + 4 H(+)(out). Its function is as follows. Component of the cytochrome c oxidase, the last enzyme in the mitochondrial electron transport chain which drives oxidative phosphorylation. The respiratory chain contains 3 multisubunit complexes succinate dehydrogenase (complex II, CII), ubiquinol-cytochrome c oxidoreductase (cytochrome b-c1 complex, complex III, CIII) and cytochrome c oxidase (complex IV, CIV), that cooperate to transfer electrons derived from NADH and succinate to molecular oxygen, creating an electrochemical gradient over the inner membrane that drives transmembrane transport and the ATP synthase. Cytochrome c oxidase is the component of the respiratory chain that catalyzes the reduction of oxygen to water. Electrons originating from reduced cytochrome c in the intermembrane space (IMS) are transferred via the dinuclear copper A center (CU(A)) of subunit 2 and heme A of subunit 1 to the active site in subunit 1, a binuclear center (BNC) formed by heme A3 and copper B (CU(B)). The BNC reduces molecular oxygen to 2 water molecules using 4 electrons from cytochrome c in the IMS and 4 protons from the mitochondrial matrix. The sequence is that of Cytochrome c oxidase subunit 3 (mt:CoIII) from Drosophila melanogaster (Fruit fly).